The primary structure comprises 141 residues: Nucleoside diphosphate kinase (141 aa).

Residues lysine 11, phenylalanine 59, arginine 87, threonine 93, arginine 104, and asparagine 114 each contribute to the ATP site. Histidine 117 serves as the catalytic Pros-phosphohistidine intermediate.

It belongs to the NDK family. In terms of assembly, homotetramer. Requires Mg(2+) as cofactor.

The protein resides in the cytoplasm. It carries out the reaction a 2'-deoxyribonucleoside 5'-diphosphate + ATP = a 2'-deoxyribonucleoside 5'-triphosphate + ADP. The enzyme catalyses a ribonucleoside 5'-diphosphate + ATP = a ribonucleoside 5'-triphosphate + ADP. In terms of biological role, major role in the synthesis of nucleoside triphosphates other than ATP. The ATP gamma phosphate is transferred to the NDP beta phosphate via a ping-pong mechanism, using a phosphorylated active-site intermediate. This chain is Nucleoside diphosphate kinase, found in Proteus mirabilis (strain HI4320).